Here is a 389-residue protein sequence, read N- to C-terminus: Na(+)/H(+) antiporter NhaA (389 aa).

The next 11 helical transmembrane spans lie at 14 to 34, 59 to 79, 95 to 115, 124 to 144, 154 to 174, 177 to 197, 213 to 233, 257 to 277, 292 to 312, 328 to 348, and 363 to 383; these read AGGILLLVAVALAMLMANSPL, LILWINDGLMAVFFLLIGLEV, SLPTFAAIGGMLVPAGVYLLF, AGWAIPAATDIAFALGIMALL, VFLLALAIIDDLGVIVIIALF, TDLSTISLVIASLAIAGLVGL, LILWVAVLKSGVHATLAGVII, PWSTFFILPVFAFANAGVYVG, IALGLMLGKPIGVMVFSYIAV, IAPVAAMCGIGFTMSMFIASL, and LGTLIGSIMAALVGYFWLSKV.

It belongs to the NhaA Na(+)/H(+) (TC 2.A.33) antiporter family.

The protein resides in the cell inner membrane. It catalyses the reaction Na(+)(in) + 2 H(+)(out) = Na(+)(out) + 2 H(+)(in). In terms of biological role, na(+)/H(+) antiporter that extrudes sodium in exchange for external protons. The polypeptide is Na(+)/H(+) antiporter NhaA (Shewanella baltica (strain OS223)).